The chain runs to 500 residues: Probable cytosol aminopeptidase (500 aa).

Residues Lys264 and Asp269 each contribute to the Mn(2+) site. Residue Lys276 is part of the active site. Positions 287, 346, and 348 each coordinate Mn(2+). Arg350 is an active-site residue.

The protein belongs to the peptidase M17 family. Mn(2+) is required as a cofactor.

It localises to the cytoplasm. It catalyses the reaction Release of an N-terminal amino acid, Xaa-|-Yaa-, in which Xaa is preferably Leu, but may be other amino acids including Pro although not Arg or Lys, and Yaa may be Pro. Amino acid amides and methyl esters are also readily hydrolyzed, but rates on arylamides are exceedingly low.. It carries out the reaction Release of an N-terminal amino acid, preferentially leucine, but not glutamic or aspartic acids.. Its function is as follows. Presumably involved in the processing and regular turnover of intracellular proteins. Catalyzes the removal of unsubstituted N-terminal amino acids from various peptides. This is Probable cytosol aminopeptidase from Chlamydia felis (strain Fe/C-56) (Chlamydophila felis).